Here is a 341-residue protein sequence, read N- to C-terminus: S-adenosylmethionine:tRNA ribosyltransferase-isomerase (341 aa).

This sequence belongs to the QueA family. Monomer.

It is found in the cytoplasm. It catalyses the reaction 7-aminomethyl-7-carbaguanosine(34) in tRNA + S-adenosyl-L-methionine = epoxyqueuosine(34) in tRNA + adenine + L-methionine + 2 H(+). It functions in the pathway tRNA modification; tRNA-queuosine biosynthesis. Transfers and isomerizes the ribose moiety from AdoMet to the 7-aminomethyl group of 7-deazaguanine (preQ1-tRNA) to give epoxyqueuosine (oQ-tRNA). This Herminiimonas arsenicoxydans protein is S-adenosylmethionine:tRNA ribosyltransferase-isomerase.